We begin with the raw amino-acid sequence, 141 residues long: Large ribosomal subunit protein uL11c (141 aa).

The protein belongs to the universal ribosomal protein uL11 family. In terms of assembly, part of the ribosomal stalk of the 50S ribosomal subunit. Interacts with L10 and the large rRNA to form the base of the stalk. L10 forms an elongated spine to which L12 dimers bind in a sequential fashion forming a multimeric L10(L12)X complex.

The protein resides in the plastid. Its subcellular location is the chloroplast. In terms of biological role, forms part of the ribosomal stalk which helps the ribosome interact with GTP-bound translation factors. The sequence is that of Large ribosomal subunit protein uL11c from Pyropia yezoensis (Susabi-nori).